The following is an 872-amino-acid chain: Leucine--tRNA ligase (872 aa).

A 'HIGH' region motif is present at residues 42 to 52 (PYPSGKLHMGH). The short motif at 632-636 (KMSKS) is the 'KMSKS' region element. Lys-635 provides a ligand contact to ATP.

Belongs to the class-I aminoacyl-tRNA synthetase family.

The protein resides in the cytoplasm. It carries out the reaction tRNA(Leu) + L-leucine + ATP = L-leucyl-tRNA(Leu) + AMP + diphosphate. This Chromobacterium violaceum (strain ATCC 12472 / DSM 30191 / JCM 1249 / CCUG 213 / NBRC 12614 / NCIMB 9131 / NCTC 9757 / MK) protein is Leucine--tRNA ligase.